The sequence spans 150 residues: Ribonuclease HI (150 aa).

Positions M1 to M141 constitute an RNase H type-1 domain. Residues D9, E47, D69, and D133 each contribute to the Mg(2+) site.

Belongs to the RNase H family. Monomer. Mg(2+) serves as cofactor.

It is found in the cytoplasm. It catalyses the reaction Endonucleolytic cleavage to 5'-phosphomonoester.. Endonuclease that specifically degrades the RNA of RNA-DNA hybrids. The protein is Ribonuclease HI of Xylella fastidiosa (strain Temecula1 / ATCC 700964).